A 483-amino-acid chain; its full sequence is ATP-dependent RNA helicase DDX25 (483 aa).

The short motif at 61-74 (LAANSLLNKLIRQS) is the Nuclear export signal element. The Q motif signature appears at 97–125 (KTFEELRLKEELLKGIYAMGFNRPSKIQE). The short motif at 100–114 (EELRLKEELLKGIYA) is the Nuclear localization signal element. A Helicase ATP-binding domain is found at 130–300 (MMLAHPPQNL…ERIIPDPNVI (171 aa)). Residue 143–150 (SQSGTGKT) participates in ATP binding. Residues 247–250 (DEAD) carry the DEAD box motif. Residues 311–478 (NIRQYYVLCG…QLDPEDMDEI (168 aa)) form the Helicase C-terminal domain.

It belongs to the DEAD box helicase family. In terms of processing, phosphorylated on threonine residues. The phosphorylated form is found in the cytoplasm but not in the nucleus.

The protein resides in the cytoplasm. The protein localises to the nucleus. The catalysed reaction is ATP + H2O = ADP + phosphate + H(+). Functionally, ATP-dependent RNA helicase. Required for mRNA export and translation regulation during spermatid development. The protein is ATP-dependent RNA helicase DDX25 (DDX25) of Bos taurus (Bovine).